The following is a 53-amino-acid chain: Tsetse thrombin inhibitor (53 aa).

Residues 1-21 form the signal peptide; that stretch reads MKFFTVLFFLLSIIYLIVAAP.

Expressed at high levels in salivary glands and midguts of adult tsetse flies.

It localises to the secreted. In terms of biological role, potent and specific inhibitor of human thrombin. It is also a potent inhibitor of thrombin-induced platelet aggregation. It is capable of antagonizing host hemostasis and facilitating blood feeding. This chain is Tsetse thrombin inhibitor (TTI), found in Glossina morsitans morsitans (Savannah tsetse fly).